Consider the following 252-residue polypeptide: 2-succinyl-6-hydroxy-2,4-cyclohexadiene-1-carboxylate synthase (252 aa).

Belongs to the AB hydrolase superfamily. MenH family. Monomer.

The catalysed reaction is 5-enolpyruvoyl-6-hydroxy-2-succinyl-cyclohex-3-ene-1-carboxylate = (1R,6R)-6-hydroxy-2-succinyl-cyclohexa-2,4-diene-1-carboxylate + pyruvate. It functions in the pathway quinol/quinone metabolism; 1,4-dihydroxy-2-naphthoate biosynthesis; 1,4-dihydroxy-2-naphthoate from chorismate: step 3/7. Its pathway is quinol/quinone metabolism; menaquinone biosynthesis. Catalyzes a proton abstraction reaction that results in 2,5-elimination of pyruvate from 2-succinyl-5-enolpyruvyl-6-hydroxy-3-cyclohexene-1-carboxylate (SEPHCHC) and the formation of 2-succinyl-6-hydroxy-2,4-cyclohexadiene-1-carboxylate (SHCHC). The chain is 2-succinyl-6-hydroxy-2,4-cyclohexadiene-1-carboxylate synthase from Salmonella heidelberg (strain SL476).